A 206-amino-acid chain; its full sequence is MKVVAFERSVQGTGASRRLRNAGKTPAIIYGAGAEPKLIELDHNALYHALKKEAFHSSILDIEVAGKVEKALLRDFQLHPFKQLVLHVDFQRVSATEKIHVKVPLHFLNQETAPGVKLGHGIVNHILNDVEVSCLPADLPEFIEVDLGNLEIGQTLHISDLKLPKGVTIVTHGGDENPAVANISVPAGEVSAAAAESAGEGDKPAA.

The protein belongs to the bacterial ribosomal protein bL25 family. CTC subfamily. Part of the 50S ribosomal subunit; part of the 5S rRNA/L5/L18/L25 subcomplex. Contacts the 5S rRNA. Binds to the 5S rRNA independently of L5 and L18.

In terms of biological role, this is one of the proteins that binds to the 5S RNA in the ribosome where it forms part of the central protuberance. This chain is Large ribosomal subunit protein bL25, found in Ralstonia nicotianae (strain ATCC BAA-1114 / GMI1000) (Ralstonia solanacearum).